The chain runs to 339 residues: DNA-directed RNA polymerase subunit alpha (339 aa).

The tract at residues 1–233 (MVREEVAGST…DLFLPFLHAE (233 aa)) is alpha N-terminal domain (alpha-NTD). The alpha C-terminal domain (alpha-CTD) stretch occupies residues 264–339 (KKGIPLNCIF…IDLLKNKLSF (76 aa)).

It belongs to the RNA polymerase alpha chain family. As to quaternary structure, in plastids the minimal PEP RNA polymerase catalytic core is composed of four subunits: alpha, beta, beta', and beta''. When a (nuclear-encoded) sigma factor is associated with the core the holoenzyme is formed, which can initiate transcription.

The protein resides in the plastid. It is found in the chloroplast. It catalyses the reaction RNA(n) + a ribonucleoside 5'-triphosphate = RNA(n+1) + diphosphate. Functionally, DNA-dependent RNA polymerase catalyzes the transcription of DNA into RNA using the four ribonucleoside triphosphates as substrates. This Thinopyrum elongatum (Tall wheatgrass) protein is DNA-directed RNA polymerase subunit alpha.